The chain runs to 100 residues: Large ribosomal subunit protein uL23 (100 aa).

It belongs to the universal ribosomal protein uL23 family. As to quaternary structure, part of the 50S ribosomal subunit. Contacts protein L29, and trigger factor when it is bound to the ribosome.

Its function is as follows. One of the early assembly proteins it binds 23S rRNA. One of the proteins that surrounds the polypeptide exit tunnel on the outside of the ribosome. Forms the main docking site for trigger factor binding to the ribosome. In Yersinia enterocolitica serotype O:8 / biotype 1B (strain NCTC 13174 / 8081), this protein is Large ribosomal subunit protein uL23.